The following is a 124-amino-acid chain: Small polypeptide ROTUNDIFOLIA LIKE 3 (124 aa).

Residues M1–S25 are disordered. N-linked (GlcNAc...) asparagine glycosylation is found at N35 and N38. Residues A59–S75 traverse the membrane as a helical segment. Positions W60–K95 are disordered. The span at S71–Q91 shows a compositional bias: low complexity. An N-linked (GlcNAc...) asparagine glycan is attached at N88. The required for DVL/RTFL small polypeptide activity stretch occupies residues R92–Y124.

The protein belongs to the DVL/RTFL small polypeptides family.

The protein resides in the cell membrane. Functionally, small polypeptide acting as a regulatory molecule which coordinates cellular responses required for differentiation, growth and development, probably by restricting polar cell proliferation in lateral organs (e.g. leaves and petioles). This Oryza sativa subsp. indica (Rice) protein is Small polypeptide ROTUNDIFOLIA LIKE 3.